The following is a 425-amino-acid chain: CAAX prenyl protease 1 homolog (425 aa).

5 consecutive transmembrane segments (helical) span residues 3-23 (LPYLEAVLCFMILMYIFETYL), 62-80 (FHFIHEAVTILMDTTILYY), 109-129 (LAFLAGVMIWSQITDLPFSLY), 155-175 (GILLSILLGPPIVAAIIIIVQ), and 188-208 (FMFALSLVMMTIYPIVIAPLF). Zn(2+) is bound at residue histidine 284. The active site involves glutamate 285. Histidine 288 is a Zn(2+) binding site. 2 helical membrane-spanning segments follow: residues 295–315 (VYSFVAVQLLMFLQFGGYTLV) and 332–352 (VIIGLIIFQHTIIPVQHLLSF). Glutamate 362 contributes to the Zn(2+) binding site. Aspartate 366 acts as the Proton donor in catalysis.

Belongs to the peptidase M48A family. Requires Zn(2+) as cofactor.

It localises to the endoplasmic reticulum membrane. The enzyme catalyses Hydrolyzes the peptide bond -P2-(S-farnesyl or geranylgeranyl)C-P1'-P2'-P3'-COOH where P1' and P2' are amino acids with aliphatic side chains and P3' is any C-terminal residue.. Its function is as follows. Proteolytically removes the C-terminal three residues of farnesylated proteins. The chain is CAAX prenyl protease 1 homolog (FACE1) from Oryza sativa subsp. japonica (Rice).